Consider the following 768-residue polypeptide: Polyadenylate-binding protein, cytoplasmic and nuclear (768 aa).

The segment covering 1–11 (MSAETATNPPV) has biased composition (polar residues). Positions 1-52 (MSAETATNPPVDTTPGAAPESATNGSNANVAADTTAGEASQTTSSTTPTAQP) are disordered. Residues 39–52 (ASQTTSSTTPTAQP) are compositionally biased toward low complexity. 4 consecutive RRM domains span residues 55–133 (ASLY…WSQR), 143–220 (GNVF…HHIA), 236–314 (TNVY…RAQK), and 340–470 (VNLY…LAQR). 3 disordered regions span residues 374–428 (DFAP…EKKP), 633–662 (QQGM…NASP), and 739–768 (KNKG…ETKS). Over residues 637–646 (GRPGQAGRGQ) the composition is skewed to gly residues. A PABC domain is found at 662 to 739 (PNGLTLQVLN…ALTVYDEYVK (78 aa)). Basic and acidic residues predominate over residues 753 to 768 (NKSKDASQETAEETKS).

This sequence belongs to the polyadenylate-binding protein type-1 family.

It localises to the cytoplasm. It is found in the nucleus. Functionally, binds the poly(A) tail of mRNA. Appears to be an important mediator of the multiple roles of the poly(A) tail in mRNA biogenesis, stability and translation. In the nucleus, involved in both mRNA cleavage and polyadenylation. Is also required for efficient mRNA export to the cytoplasm. Acts in concert with a poly(A)-specific nuclease (PAN) to affect poly(A) tail shortening, which may occur concomitantly with either nucleocytoplasmic mRNA transport or translational initiation. In the cytoplasm, stimulates translation initiation and regulates mRNA decay through translation termination-coupled poly(A) shortening, probably mediated by PAN. The sequence is that of Polyadenylate-binding protein, cytoplasmic and nuclear (PAB1) from Coccidioides immitis (strain RS) (Valley fever fungus).